The primary structure comprises 278 residues: Protein canopy homolog 3 (278 aa).

The first 30 residues, 1 to 30 (MDSMPEPASRCLLLLPLLLLLLLLLPAPEL), serve as a signal peptide directing secretion. The 225-residue stretch at 47–271 (SKCEVCKYVA…EGIQKASPLT (225 aa)) folds into the Saposin B-type domain. Cystine bridges form between cysteine 49-cysteine 206, cysteine 52-cysteine 194, and cysteine 104-cysteine 166. Asparagine 153 carries N-linked (GlcNAc...) asparagine glycosylation. The stretch at 153 to 179 (NETSAEVADLKKQCDVLVEEFEEVIED) forms a coiled coil. Positions 215–278 (KGDTAALGGK…PLTHSPPDEL (64 aa)) are disordered. Positions 233–243 (AKAAGGRSSSS) are enriched in low complexity.

The protein belongs to the canopy family. In terms of assembly, interacts with HSP90B1; this interaction is disrupted in the presence of ATP. Interacts with TLR1, TLR2, TLR4 and TLR9. Strongest interaction with TLR4.

It is found in the endoplasmic reticulum. Toll-like receptor (TLR)-specific co-chaperone for HSP90B1. Required for proper TLR folding, except that of TLR3, and hence controls TLR exit from the endoplasmic reticulum. Consequently, required for both innate and adaptive immune responses. This chain is Protein canopy homolog 3 (CNPY3), found in Homo sapiens (Human).